Here is a 772-residue protein sequence, read N- to C-terminus: Subtilisin-like protease SBT5.3 (772 aa).

The signal sequence occupies residues 1-25 (MKLTHNFSFLLLLLLVHMSSKHILA). The 86-residue stretch at 31 to 116 (SYVVYFGAHS…VFPNKALKLH (86 aa)) folds into the Inhibitor I9 domain. The Peptidase S8 domain occupies 120 to 628 (SWDFLGLEHN…AGHVQPNLAV (509 aa)). Aspartate 153 (charge relay system) is an active-site residue. The N-linked (GlcNAc...) asparagine glycan is linked to asparagine 211. Histidine 223 serves as the catalytic Charge relay system. 3 N-linked (GlcNAc...) asparagine glycosylation sites follow: asparagine 246, asparagine 306, and asparagine 396. Residues 398-480 (SALDAQLCKL…KDSFAVSRYI (83 aa)) enclose the PA domain. Serine 561 (charge relay system) is an active-site residue. Asparagine 606, asparagine 651, asparagine 662, asparagine 684, and asparagine 725 each carry an N-linked (GlcNAc...) asparagine glycan.

It belongs to the peptidase S8 family. In terms of tissue distribution, expressed specifically at sites of lateral root emergence.

It localises to the secreted. It is found in the cell wall. Serine protease. Has a substrate preference for the hydrophobic residues Phe and Ala and the basic residue Asp in the P1 position, and for Asp, Leu or Ala in the P1' position. May play a role in the degradation of structural proteins in the extracellular matrix of cells located above sites of lateral root formation and thus facilitate lateral root emergence. The polypeptide is Subtilisin-like protease SBT5.3 (AIR3) (Arabidopsis thaliana (Mouse-ear cress)).